The primary structure comprises 647 residues: Sialidase (647 aa).

The first 37 residues, 1–37 (MTANPYLRRLPRRRAVSFLLAPALAAATVAGASPAQA), serve as a signal peptide directing secretion. Substrate is bound at residue Arg-68. Asp-92 (proton acceptor) is an active-site residue. 3 BNR repeats span residues 102–113 (RRSTDGGRTWGE), 175–186 (ATSTDGGLTWSH), and 239–250 (VYSDDHGRTWRA). Glu-260 (nucleophile) is an active-site residue. Arg-276 serves as a coordination point for substrate. BNR repeat units follow at residues 287 to 298 (AVSTDGGHSYGP) and 348 to 359 (RMSCDDGQTWPV). The active-site Nucleophile is the Tyr-370. An F5/8 type C domain is found at 496 to 646 (TFTVTVGLLD…AVAELEVEGQ (151 aa)).

It belongs to the glycosyl hydrolase 33 family.

The protein resides in the secreted. It carries out the reaction Hydrolysis of alpha-(2-&gt;3)-, alpha-(2-&gt;6)-, alpha-(2-&gt;8)- glycosidic linkages of terminal sialic acid residues in oligosaccharides, glycoproteins, glycolipids, colominic acid and synthetic substrates.. To release sialic acids for use as carbon and energy sources for this non-pathogenic bacterium while in pathogenic microorganisms, sialidases have been suggested to be pathogenic factors. This Micromonospora viridifaciens protein is Sialidase (nedA).